The sequence spans 115 residues: Histone H2A-Bbd type 1 (115 aa).

Residues 1–21 are disordered; that stretch reads MPRRRRRRGSSGAGGRGRTCS. Residues 87–115 are docking domain; the sequence is LLDMVVHNDRLLSTLFNTTTISQVAPGED.

Belongs to the histone H2A family. In terms of assembly, the nucleosome is a histone octamer containing two molecules each of H2A, H2B, H3 and H4 assembled in one H3-H4 heterotetramer and two H2A-H2B heterodimers. May be incorporated into a proportion of nucleosomes, replacing one or more H2A molecules. As to expression, present in mature sperm.

It localises to the nucleus. Its subcellular location is the chromosome. In terms of biological role, atypical histone H2A which can replace conventional H2A in some nucleosomes and is associated with active transcription and mRNA processing. Nucleosomes wrap and compact DNA into chromatin, limiting DNA accessibility to the cellular machineries which require DNA as a template. Histones thereby play a central role in transcription regulation, DNA repair, DNA replication and chromosomal stability. Nucleosomes containing this histone are less rigid and organize less DNA than canonical nucleosomes in vivo. They are enriched in actively transcribed genes and associate with the elongating form of RNA polymerase. They associate with spliceosome components and are required for mRNA splicing. The protein is Histone H2A-Bbd type 1 of Homo sapiens (Human).